A 673-amino-acid chain; its full sequence is Methionine--tRNA ligase (673 aa).

A 'HIGH' region motif is present at residues 13–23; it reads PYANGSIHLGH. C144, C147, C157, and C160 together coordinate Zn(2+). A 'KMSKS' region motif is present at residues 330-334; the sequence is KMSKS. An ATP-binding site is contributed by K333. One can recognise a tRNA-binding domain in the interval 572-673; it reads DFAQLDLRIA…GRARAGMTIS (102 aa).

This sequence belongs to the class-I aminoacyl-tRNA synthetase family. MetG type 1 subfamily. Homodimer. It depends on Zn(2+) as a cofactor.

The protein resides in the cytoplasm. It catalyses the reaction tRNA(Met) + L-methionine + ATP = L-methionyl-tRNA(Met) + AMP + diphosphate. In terms of biological role, is required not only for elongation of protein synthesis but also for the initiation of all mRNA translation through initiator tRNA(fMet) aminoacylation. In Dichelobacter nodosus (strain VCS1703A), this protein is Methionine--tRNA ligase.